Consider the following 431-residue polypeptide: MENKSNSQILFAEAQQYIPGGVNSPVRAFKSVGQEFPRFIKFAKGAYLYDVDWNKYIDYIGSWGPMILGHCDDDVLEVIQCQVKNGLSYGAPCKQEVDLAKKIIELMPNIEQVRFVNSGTEATMSAIRLARAYTCRNKIIKFEGCYHGHADEFLVAAGSGALSLGQPNSPGVPEDVVKDTLVASFNDMESIQALFEKYKDEIACIIVEPIAGNMNMIFPQDDFLAKLRAICDQNSSLLIFDEVMTGFRVALGGAQSIYNVKPDLTTLGKVIGGGMPVGAFGGRKEIMQKVSPAGPVYQAGTLSGNPIAMTAGIKTLEKISQLGFFDELGAKAQKLVDGLNEAAKAYDFKFHAKCLGGMFGLFFCSDKIAVNTFVDLGKTNLKMFNQFFAYMLDNGVYLAPSAYEAGFISIAHSDEDIEKTICLAKKFFQEN.

The residue at position 269 (lysine 269) is an N6-(pyridoxal phosphate)lysine.

It belongs to the class-III pyridoxal-phosphate-dependent aminotransferase family. HemL subfamily. As to quaternary structure, homodimer. The cofactor is pyridoxal 5'-phosphate.

The protein localises to the cytoplasm. It catalyses the reaction (S)-4-amino-5-oxopentanoate = 5-aminolevulinate. It functions in the pathway porphyrin-containing compound metabolism; protoporphyrin-IX biosynthesis; 5-aminolevulinate from L-glutamyl-tRNA(Glu): step 2/2. In Francisella tularensis subsp. mediasiatica (strain FSC147), this protein is Glutamate-1-semialdehyde 2,1-aminomutase.